Consider the following 872-residue polypeptide: Probable LRR receptor-like serine/threonine-protein kinase At1g51880 (872 aa).

Positions 1–23 (MKSIHGFLLFLITAYVILESVQA) are cleaved as a signal peptide. At 24–513 (QDQLGFISLD…GKSKKVPMIP (490 aa)) the chain is on the extracellular side. 9 N-linked (GlcNAc...) asparagine glycosylation sites follow: Asn40, Asn49, Asn96, Asn181, Asn255, Asn268, Asn294, Asn339, and Asn401. LRR repeat units follow at residues 411–434 (RIISLNLAENKLTGTITPEISKLT), 435–457 (QLIELDLSKNDLSGEIPEFFADM), and 459–482 (LLKLINLSGNLGLNSTIPDSIQQR). Residues Asn464 and Asn472 are each glycosylated (N-linked (GlcNAc...) asparagine). Residues 514 to 534 (IVASVAGVFALLVILAIFFVV) traverse the membrane as a helical segment. The Cytoplasmic portion of the chain corresponds to 535-872 (RRKNGESNKG…SASEFSPGAR (338 aa)). Position 557 is a phosphothreonine (Thr557). The 273-residue stretch at 566–838 (NNFERVLGKG…HVVTELNECV (273 aa)) folds into the Protein kinase domain. ATP contacts are provided by residues 572–580 (LGKGGFGTV) and Lys593. A Phosphotyrosine modification is found at Tyr638. Asp690 (proton acceptor) is an active-site residue. The residue at position 724 (Ser724) is a Phosphoserine. 2 positions are modified to phosphothreonine: Thr725 and Thr730. Phosphotyrosine is present on Tyr738.

The protein belongs to the protein kinase superfamily. Ser/Thr protein kinase family.

It is found in the membrane. It catalyses the reaction L-seryl-[protein] + ATP = O-phospho-L-seryl-[protein] + ADP + H(+). The catalysed reaction is L-threonyl-[protein] + ATP = O-phospho-L-threonyl-[protein] + ADP + H(+). The chain is Probable LRR receptor-like serine/threonine-protein kinase At1g51880 from Arabidopsis thaliana (Mouse-ear cress).